We begin with the raw amino-acid sequence, 322 residues long: uncharacterized protein (322 aa).

Positions 1–27 are cleaved as a signal peptide; it reads MKRLFWNLKHKKAWLVLLLGTGMILSS. Cys-28 carries the N-palmitoyl cysteine lipid modification. Cys-28 carries S-diacylglycerol cysteine lipidation. The span at 235–254 shows a compositional bias: polar residues; sequence DNSTNPNAPGSGQGDSTPPA. A disordered region spans residues 235 to 298; that stretch reads DNSTNPNAPG…AVQRSQKSYG (64 aa). The segment covering 257–267 has biased composition (gly residues); sequence GEGGGSDGSSG. Residues 274–296 are compositionally biased toward polar residues; it reads NGQNTTPTSPQSSQPAVQRSQKS.

It is found in the cell membrane. This is an uncharacterized protein from Mycoplasma genitalium (strain ATCC 33530 / DSM 19775 / NCTC 10195 / G37) (Mycoplasmoides genitalium).